Consider the following 359-residue polypeptide: Photosystem II protein D1 2 (359 aa).

Transmembrane regions (helical) follow at residues 29–46 (YVGWFGVLMIPTLLAATT), 118–133 (HFLIGIYAYMGREWEL), and 142–156 (WICVAYSAPVAAASA). Residue H118 coordinates chlorophyll a. Y126 contributes to the pheophytin a binding site. [CaMn4O5] cluster-binding residues include D170 and E189. The helical transmembrane segment at 197 to 218 (FHMLGVAGVFGGSLFSAMHGSL) threads the bilayer. H198 is a binding site for chlorophyll a. Residues H215 and 264 to 265 (SF) each bind a quinone. Position 215 (H215) interacts with Fe cation. Residue H272 coordinates Fe cation. Residues 274-288 (FLAAWPVVGIWFTAL) traverse the membrane as a helical segment. [CaMn4O5] cluster contacts are provided by H332, E333, D342, and A344. Positions 345–359 (AAESTPVALQAPAIG) are excised as a propeptide.

Belongs to the reaction center PufL/M/PsbA/D family. PSII is composed of 1 copy each of membrane proteins PsbA, PsbB, PsbC, PsbD, PsbE, PsbF, PsbH, PsbI, PsbJ, PsbK, PsbL, PsbM, PsbT, PsbX, PsbY, PsbZ, Psb30/Ycf12, peripheral proteins PsbO, CyanoQ (PsbQ), PsbU, PsbV and a large number of cofactors. It forms dimeric complexes. The D1/D2 heterodimer binds P680, chlorophylls that are the primary electron donor of PSII, and subsequent electron acceptors. It shares a non-heme iron and each subunit binds pheophytin, quinone, additional chlorophylls, carotenoids and lipids. D1 provides most of the ligands for the Mn4-Ca-O5 cluster of the oxygen-evolving complex (OEC). There is also a Cl(-1) ion associated with D1 and D2, which is required for oxygen evolution. The PSII complex binds additional chlorophylls, carotenoids and specific lipids. serves as cofactor. Tyr-161 forms a radical intermediate that is referred to as redox-active TyrZ, YZ or Y-Z. Post-translationally, C-terminally processed by CtpA; processing is essential to allow assembly of the oxygen-evolving complex and thus photosynthetic growth.

It localises to the cellular thylakoid membrane. It carries out the reaction 2 a plastoquinone + 4 hnu + 2 H2O = 2 a plastoquinol + O2. Functionally, photosystem II (PSII) is a light-driven water:plastoquinone oxidoreductase that uses light energy to abstract electrons from H(2)O, generating O(2) and a proton gradient subsequently used for ATP formation. It consists of a core antenna complex that captures photons, and an electron transfer chain that converts photonic excitation into a charge separation. The D1/D2 (PsbA/PsbD) reaction center heterodimer binds P680, the primary electron donor of PSII as well as several subsequent electron acceptors. This chain is Photosystem II protein D1 2, found in Synechococcus sp. (strain CC9311).